Reading from the N-terminus, the 352-residue chain is S-adenosylmethionine:tRNA ribosyltransferase-isomerase (352 aa).

The protein belongs to the QueA family. As to quaternary structure, monomer.

Its subcellular location is the cytoplasm. It catalyses the reaction 7-aminomethyl-7-carbaguanosine(34) in tRNA + S-adenosyl-L-methionine = epoxyqueuosine(34) in tRNA + adenine + L-methionine + 2 H(+). It functions in the pathway tRNA modification; tRNA-queuosine biosynthesis. Transfers and isomerizes the ribose moiety from AdoMet to the 7-aminomethyl group of 7-deazaguanine (preQ1-tRNA) to give epoxyqueuosine (oQ-tRNA). This chain is S-adenosylmethionine:tRNA ribosyltransferase-isomerase, found in Allorhizobium ampelinum (strain ATCC BAA-846 / DSM 112012 / S4) (Agrobacterium vitis (strain S4)).